Here is a 309-residue protein sequence, read N- to C-terminus: Methionyl-tRNA formyltransferase (309 aa).

Residue 109–112 (SLLP) participates in (6S)-5,6,7,8-tetrahydrofolate binding.

Belongs to the Fmt family.

The enzyme catalyses L-methionyl-tRNA(fMet) + (6R)-10-formyltetrahydrofolate = N-formyl-L-methionyl-tRNA(fMet) + (6S)-5,6,7,8-tetrahydrofolate + H(+). Attaches a formyl group to the free amino group of methionyl-tRNA(fMet). The formyl group appears to play a dual role in the initiator identity of N-formylmethionyl-tRNA by promoting its recognition by IF2 and preventing the misappropriation of this tRNA by the elongation apparatus. The sequence is that of Methionyl-tRNA formyltransferase from Thiobacillus denitrificans (strain ATCC 25259 / T1).